The primary structure comprises 502 residues: ATP synthase subunit beta (502 aa).

Position 153–160 (G153–T160) interacts with ATP.

It belongs to the ATPase alpha/beta chains family. F-type ATPases have 2 components, CF(1) - the catalytic core - and CF(0) - the membrane proton channel. CF(1) has five subunits: alpha(3), beta(3), gamma(1), delta(1), epsilon(1). CF(0) has three main subunits: a(1), b(2) and c(9-12). The alpha and beta chains form an alternating ring which encloses part of the gamma chain. CF(1) is attached to CF(0) by a central stalk formed by the gamma and epsilon chains, while a peripheral stalk is formed by the delta and b chains.

It is found in the cell membrane. The catalysed reaction is ATP + H2O + 4 H(+)(in) = ADP + phosphate + 5 H(+)(out). Its function is as follows. Produces ATP from ADP in the presence of a proton gradient across the membrane. The catalytic sites are hosted primarily by the beta subunits. This chain is ATP synthase subunit beta, found in Amoebophilus asiaticus (strain 5a2).